Here is a 402-residue protein sequence, read N- to C-terminus: Probable 2,3-bisphosphoglycerate-independent phosphoglycerate mutase (402 aa).

This sequence belongs to the BPG-independent phosphoglycerate mutase family. A-PGAM subfamily.

The enzyme catalyses (2R)-2-phosphoglycerate = (2R)-3-phosphoglycerate. Its pathway is carbohydrate degradation; glycolysis; pyruvate from D-glyceraldehyde 3-phosphate: step 3/5. Functionally, catalyzes the interconversion of 2-phosphoglycerate and 3-phosphoglycerate. The protein is Probable 2,3-bisphosphoglycerate-independent phosphoglycerate mutase of Thermosipho africanus (strain TCF52B).